The sequence spans 1819 residues: U3 small nucleolar RNA-associated protein 10 (1819 aa).

The stretch at L1779 to Y1817 is one HEAT repeat.

Belongs to the HEATR1/UTP10 family. As to quaternary structure, component of the ribosomal small subunit (SSU) processome.

The protein resides in the nucleus. It localises to the nucleolus. Its function is as follows. Involved in nucleolar processing of pre-18S ribosomal RNA. Involved in ribosome biosynthesis. The polypeptide is U3 small nucleolar RNA-associated protein 10 (Meyerozyma guilliermondii (strain ATCC 6260 / CBS 566 / DSM 6381 / JCM 1539 / NBRC 10279 / NRRL Y-324) (Yeast)).